A 428-amino-acid chain; its full sequence is Serine--tRNA ligase (428 aa).

An L-serine-binding site is contributed by 231–233 (TAE). An ATP-binding site is contributed by 262–264 (RSE). Glu-285 contributes to the L-serine binding site. 349-352 (EISS) serves as a coordination point for ATP. Ser-385 provides a ligand contact to L-serine.

Belongs to the class-II aminoacyl-tRNA synthetase family. Type-1 seryl-tRNA synthetase subfamily. In terms of assembly, homodimer. The tRNA molecule binds across the dimer.

The protein localises to the cytoplasm. The catalysed reaction is tRNA(Ser) + L-serine + ATP = L-seryl-tRNA(Ser) + AMP + diphosphate + H(+). The enzyme catalyses tRNA(Sec) + L-serine + ATP = L-seryl-tRNA(Sec) + AMP + diphosphate + H(+). It participates in aminoacyl-tRNA biosynthesis; selenocysteinyl-tRNA(Sec) biosynthesis; L-seryl-tRNA(Sec) from L-serine and tRNA(Sec): step 1/1. Functionally, catalyzes the attachment of serine to tRNA(Ser). Is also able to aminoacylate tRNA(Sec) with serine, to form the misacylated tRNA L-seryl-tRNA(Sec), which will be further converted into selenocysteinyl-tRNA(Sec). The protein is Serine--tRNA ligase of Staphylococcus aureus (strain MSSA476).